The primary structure comprises 624 residues: Pentatricopeptide repeat-containing protein At2g32630 (624 aa).

PPR repeat units lie at residues 153–187 (FEKF…GLSI), 188–222 (DERS…GVKI), 223–257 (TVYS…GIKP), 258–292 (EAYT…GVVY), 293–327 (NKVT…GIES), 328–362 (DVHV…GLSP), 363–397 (SSYT…GVNI), 398–432 (TQVV…GFQA), 433–467 (DVFT…GVKL), 468–502 (STVS…GVQP), 503–537 (NAIT…GMDP), 538–572 (DSYT…GLDQ), and 573–607 (NSVT…GYTI).

This sequence belongs to the PPR family. P subfamily.

The polypeptide is Pentatricopeptide repeat-containing protein At2g32630 (Arabidopsis thaliana (Mouse-ear cress)).